The primary structure comprises 444 residues: tRNA modification GTPase MnmE (444 aa).

(6S)-5-formyl-5,6,7,8-tetrahydrofolate contacts are provided by R24, E81, and K121. The TrmE-type G domain occupies 218–368 (GLTVVIAGPP…LLDALVGFAR (151 aa)). GTP contacts are provided by residues 228–233 (NAGKST), 247–253 (SPQAGTT), 272–275 (DTAG), and 349–351 (SAR). S232 and T253 together coordinate Mg(2+). K444 lines the (6S)-5-formyl-5,6,7,8-tetrahydrofolate pocket.

The protein belongs to the TRAFAC class TrmE-Era-EngA-EngB-Septin-like GTPase superfamily. TrmE GTPase family. As to quaternary structure, homodimer. Heterotetramer of two MnmE and two MnmG subunits. Requires K(+) as cofactor.

The protein localises to the cytoplasm. Exhibits a very high intrinsic GTPase hydrolysis rate. Involved in the addition of a carboxymethylaminomethyl (cmnm) group at the wobble position (U34) of certain tRNAs, forming tRNA-cmnm(5)s(2)U34. This is tRNA modification GTPase MnmE from Bradyrhizobium sp. (strain ORS 278).